The sequence spans 662 residues: Transforming growth factor beta activator LRRC32 (662 aa).

An N-terminal signal peptide occupies residues 1 to 17; it reads MRPQILLLLALLTLGLA. Over 18 to 625 the chain is Extracellular; that stretch reads AQRQDKVPCK…EDCEKGGLKN (608 aa). An LRRNT domain is found at 21–48; sequence QDKVPCKMVDKKVSCQGLGLLQVPSVLP. LRR repeat units lie at residues 50-73, 74-95, 98-119, 125-145, 150-171, 174-195, 198-219, 220-240, 244-265, and 266-286; these read DTET…GFYT, ALRH…AFQA, HLEH…SAGG, RVTS…ERLL, SLHT…TFRD, VLEQ…AFEG, RLTH…SLQQ, LRVL…SQPQ, QLTW…AALP, and RLIY…PPQD. N-linked (GlcNAc...) asparagine glycosylation is present at N203. 2 N-linked (GlcNAc...) asparagine glycosylation sites follow: N271 and N308. 10 LRR repeats span residues 316–339, 340–361, 364–385, 387–408, 411–432, 444–465, 467–488, 492–513, 515–536, and 537–558; these read QLLN…EHLT, SLCF…RSGS, CLML…ARAL, SLRT…TFAN, SLQR…DEPG, SLHS…AFLH, PLTE…ALGG, SLEV…LPCF, CLKR…TQAV, and SLEV…AMGG. The N-linked (GlcNAc...) asparagine glycan is linked to N345. A glycan (N-linked (GlcNAc...) asparagine) is linked at N545. One can recognise an LRRCT domain in the interval 571–620; the sequence is NPLSCCGNGWLAAQLHQGRVDVDATQDLICRFSSQEEVSLSHVRPEDCEK. The chain crosses the membrane as a helical span at residues 626-646; the sequence is INLIIILTFILVSAILLTTLA. Topologically, residues 647–662 are cytoplasmic; the sequence is TCCCVRRQKFNQQYKA.

This sequence belongs to the LRRC32/LRRC33 family. As to quaternary structure, interacts with TGFB1; associates via disulfide bonds with the Latency-associated peptide chain (LAP) regulatory chain of TGFB1, leading to regulate activation of TGF-beta-1. Interacts with TGFB2. Interacts with TGFB3; associates via disulfide bonds with the Latency-associated peptide chain (LAP) regulatory chain of TGFB3, leading to regulate activation of TGF-beta-3. Interacts with LAPTM4B; decreases TGFB1 production in regulatory T-cells.

The protein resides in the cell membrane. The protein localises to the cell surface. In terms of biological role, key regulator of transforming growth factor beta (TGFB1, TGFB2 and TGFB3) that controls TGF-beta activation by maintaining it in a latent state during storage in extracellular space. Associates specifically via disulfide bonds with the Latency-associated peptide (LAP), which is the regulatory chain of TGF-beta, and regulates integrin-dependent activation of TGF-beta. Able to outcompete LTBP1 for binding to LAP regulatory chain of TGF-beta. Controls activation of TGF-beta-1 (TGFB1) on the surface of activated regulatory T-cells (Tregs). Required for epithelial fusion during palate development by regulating activation of TGF-beta-3 (TGFB3). This chain is Transforming growth factor beta activator LRRC32, found in Pongo abelii (Sumatran orangutan).